A 324-amino-acid polypeptide reads, in one-letter code: Hydroxylase/desaturase CTB9 (324 aa).

The segment covering 1 to 11 (MTSTITTTETL) has biased composition (polar residues). Disordered stretches follow at residues 1–33 (MTST…KELP) and 288–308 (TARR…EPRA).

This sequence belongs to the asaB hydroxylase/desaturase family.

The protein operates within mycotoxin biosynthesis. Functionally, hydroxylase/desaturase; part of the gene cluster that mediates the biosynthesis of cercosporin, a light-activated, non-host-selective toxin. The perylenequinone chromophore of cercosporin absorbs light energy to attain an electronically-activated triplet state and produces active oxygen species such as the hydroxyl radical, superoxide, hydrogen peroxide or singlet oxygen upon reaction with oxygen molecules. These reactive oxygen species cause damage to various cellular components including lipids, proteins and nucleic acids. The first step of cercosporin biosynthesis is performed by the polyketide synthase CTB1 which catalyzes the formation of nor-toralactone. The starter unit acyltransferase (SAT) domain of CTB1 initiates polyketide extension by the selective utilization of acetyl-CoA, which is elongated to the heptaketide in the beta-ketoacyl synthase (KS) domain by successive condensations with six malonyl units introduced by the malonyl acyltransferase (MAT) domain. The product template (PT) domain catalyzes C4-C9 and C2-C11 aldol cyclizations and dehydrations to a trihydroxynaphthalene, which is thought to be delivered to the thioesterase (TE) domain for product release. The bifunctional enzyme CTB3 then methylates nor-toralactone to toralactone before conducting an unusual oxidative aromatic ring opening. The O-methyltransferase CTB2 further methylates the nascent OH-6 of the CBT3 product, blocking further oxidation at this site before the reductase CTB6 reduces the 2-oxopropyl ketone at position C7, giving naphthalene. The FAD-dependent monooxygenase CTB5 in concert with the multicopper oxidase CTB12 are responsible for homodimerization of naphthalene with CTB7 installing the dioxepine moiety, finally producing cercosporin. The fasciclin domain-containing protein CTB11 might act with CTB5 and CTB12 whereas the roles of CTB9 and CTB10 have still to be elucidated. In Cercospora beticola (Sugarbeet leaf spot fungus), this protein is Hydroxylase/desaturase CTB9.